We begin with the raw amino-acid sequence, 306 residues long: Pantothenate kinase (306 aa).

91-98 is a binding site for ATP; that stretch reads GSVAVGKS.

Belongs to the prokaryotic pantothenate kinase family.

It localises to the cytoplasm. The enzyme catalyses (R)-pantothenate + ATP = (R)-4'-phosphopantothenate + ADP + H(+). Its pathway is cofactor biosynthesis; coenzyme A biosynthesis; CoA from (R)-pantothenate: step 1/5. The sequence is that of Pantothenate kinase from Streptococcus suis (strain 98HAH33).